The sequence spans 199 residues: Nucleoid occlusion factor SlmA (199 aa).

The region spanning 11 to 71 (ERRQQVLTVL…ALIDNLEAHL (61 aa)) is the HTH tetR-type domain. The H-T-H motif DNA-binding region spans 34–53 (TTARIAAEVGVSEAALYRYY).

The protein belongs to the nucleoid occlusion factor SlmA family. In terms of assembly, homodimer. Interacts with FtsZ.

The protein localises to the cytoplasm. Its subcellular location is the nucleoid. Required for nucleoid occlusion (NO) phenomenon, which prevents Z-ring formation and cell division over the nucleoid. Acts as a DNA-associated cell division inhibitor that binds simultaneously chromosomal DNA and FtsZ, and disrupts the assembly of FtsZ polymers. SlmA-DNA-binding sequences (SBS) are dispersed on non-Ter regions of the chromosome, preventing FtsZ polymerization at these regions. This Pasteurella multocida (strain Pm70) protein is Nucleoid occlusion factor SlmA.